The sequence spans 310 residues: Coproporphyrin III ferrochelatase (310 aa).

2 residues coordinate Fe(2+): H184 and E265.

It belongs to the ferrochelatase family.

It localises to the cytoplasm. It catalyses the reaction Fe-coproporphyrin III + 2 H(+) = coproporphyrin III + Fe(2+). It participates in porphyrin-containing compound metabolism; protoheme biosynthesis. Functionally, involved in coproporphyrin-dependent heme b biosynthesis. Catalyzes the insertion of ferrous iron into coproporphyrin III to form Fe-coproporphyrin III. The polypeptide is Coproporphyrin III ferrochelatase (Limosilactobacillus reuteri (strain DSM 20016) (Lactobacillus reuteri)).